The chain runs to 251 residues: Flap endonuclease Xni (251 aa).

Aspartate 104 contacts Mg(2+). The 89-residue stretch at 160 to 248 (VSPQQLSDYW…ALTGNLQQLR (89 aa)) folds into the 5'-3' exonuclease domain. Residues leucine 171, alanine 172, proline 180, valine 182, and isoleucine 185 each coordinate K(+). An interaction with DNA region spans residues 184 to 189 (GIGPKT).

It belongs to the Xni family. Mg(2+) is required as a cofactor. It depends on K(+) as a cofactor.

In terms of biological role, has flap endonuclease activity. During DNA replication, flap endonucleases cleave the 5'-overhanging flap structure that is generated by displacement synthesis when DNA polymerase encounters the 5'-end of a downstream Okazaki fragment. In Serratia proteamaculans (strain 568), this protein is Flap endonuclease Xni.